Here is a 178-residue protein sequence, read N- to C-terminus: tRNA (cytidine(56)-2'-O)-methyltransferase (178 aa).

Residues leucine 84, 109–113, and 127–134 each bind S-adenosyl-L-methionine; these read GAEKV and IGNQPHSE.

Belongs to the aTrm56 family. In terms of assembly, homodimer.

The protein localises to the cytoplasm. The enzyme catalyses cytidine(56) in tRNA + S-adenosyl-L-methionine = 2'-O-methylcytidine(56) in tRNA + S-adenosyl-L-homocysteine + H(+). Specifically catalyzes the AdoMet-dependent 2'-O-ribose methylation of cytidine at position 56 in tRNAs. The sequence is that of tRNA (cytidine(56)-2'-O)-methyltransferase from Methanococcoides burtonii (strain DSM 6242 / NBRC 107633 / OCM 468 / ACE-M).